A 241-amino-acid chain; its full sequence is Caffeoyl-CoA O-methyltransferase (241 aa).

Substrate is bound at residue Lys-14. S-adenosyl-L-methionine-binding positions include Thr-58, Glu-80, 82 to 83 (GV), Ser-88, Asp-106, and Ala-135. Substrate is bound at residue Asp-158. Residue Asp-158 participates in a divalent metal cation binding. Asp-160 contributes to the S-adenosyl-L-methionine binding site. The a divalent metal cation site is built by Asp-184 and Asn-185.

This sequence belongs to the class I-like SAM-binding methyltransferase superfamily. Cation-dependent O-methyltransferase family. CCoAMT subfamily. A divalent metal cation serves as cofactor.

It carries out the reaction (E)-caffeoyl-CoA + S-adenosyl-L-methionine = (E)-feruloyl-CoA + S-adenosyl-L-homocysteine + H(+). It participates in aromatic compound metabolism; phenylpropanoid biosynthesis. Methylates caffeoyl-CoA to feruloyl-CoA and 5-hydroxyferuloyl-CoA to sinapoyl-CoA. Plays a role in the synthesis of feruloylated polysaccharides. Involved in the reinforcement of the plant cell wall. Also involved in the responding to wounding or pathogen challenge by the increased formation of cell wall-bound ferulic acid polymers. The sequence is that of Caffeoyl-CoA O-methyltransferase from Stellaria longipes (Longstalk starwort).